A 175-amino-acid chain; its full sequence is NADH-ubiquinone oxidoreductase chain 6 (175 aa).

5 helical membrane-spanning segments follow: residues 1-21 (MMTY…VGFS), 27-47 (VYGG…VMNF), 49-69 (GSFL…VVFG), 88-108 (VVLG…LYVL), and 149-169 (YGVW…VVIM).

This sequence belongs to the complex I subunit 6 family. In terms of assembly, core subunit of respiratory chain NADH dehydrogenase (Complex I) which is composed of 45 different subunits.

It localises to the mitochondrion inner membrane. The enzyme catalyses a ubiquinone + NADH + 5 H(+)(in) = a ubiquinol + NAD(+) + 4 H(+)(out). Core subunit of the mitochondrial membrane respiratory chain NADH dehydrogenase (Complex I) which catalyzes electron transfer from NADH through the respiratory chain, using ubiquinone as an electron acceptor. Essential for the catalytic activity and assembly of complex I. The chain is NADH-ubiquinone oxidoreductase chain 6 (MT-ND6) from Pteropus dasymallus (Ryukyu flying fox).